Here is a 381-residue protein sequence, read N- to C-terminus: Class E basic helix-loop-helix protein 22 (381 aa).

3 disordered regions span residues 30-94, 135-154, and 188-242; these read RLEA…GGGG, RGSV…DSDG, and HLHG…EQKA. Gly residues predominate over residues 82 to 94; sequence GGGGGSAGSGGGG. A compositionally biased stretch (gly residues) spans 198–225; sequence GGLGGGGGGGSSSGSSGGGGGSGSGSGG. The bHLH domain maps to 242-296; it reads ALRLNINARERRRMHDLNDALDELRAVIPYAHSPSVRKLSKIATLLLAKNYILMQ.

As to quaternary structure, interacts with PRDM8. In terms of tissue distribution, brain-specific, with the highest expression in the cerebellum.

The protein resides in the nucleus. In terms of biological role, inhibits DNA binding of TCF3/E47 homodimers and TCF3 (E47)/NEUROD1 heterodimers and acts as a strong repressor of Neurod1 and Myod-responsive genes, probably by heterodimerization with class a basic helix-loop-helix factors. Despite the presence of an intact basic domain, does not bind to DNA. In the brain, may function as an area-specific transcription factor that regulates the postmitotic acquisition of area identities and elucidate the genetic hierarchy between progenitors and postmitotic neurons driving neocortical arealization. May be required for the survival of a specific population of inhibitory neurons in the superficial laminae of the spinal cord dorsal horn that may regulate pruritis. Seems to play a crucial role in the retinogenesis, in the specification of amacrine and bipolar subtypes. Forms with PRDM8 a transcriptional repressor complex controlling genes involved in neural development and neuronal differentiation. This is Class E basic helix-loop-helix protein 22 (BHLHE22) from Homo sapiens (Human).